We begin with the raw amino-acid sequence, 200 residues long: Adenylate kinase (200 aa).

10 to 15 (GAGKGT) lines the ATP pocket. Positions 30–59 (STGDMLRAAVAAGTPVGLEAKAVMESGGLV) are NMP. AMP contacts are provided by residues Thr31, Arg36, 57-59 (GLV), 85-88 (GFPR), and Gln92. The LID stretch occupies residues 126–142 (KRAAETLARGQAVRKDD). Arg127 provides a ligand contact to ATP. AMP is bound by residues Arg139 and Arg150. Gln178 lines the ATP pocket.

This sequence belongs to the adenylate kinase family. As to quaternary structure, monomer.

The protein localises to the cytoplasm. The catalysed reaction is AMP + ATP = 2 ADP. The protein operates within purine metabolism; AMP biosynthesis via salvage pathway; AMP from ADP: step 1/1. In terms of biological role, catalyzes the reversible transfer of the terminal phosphate group between ATP and AMP. Plays an important role in cellular energy homeostasis and in adenine nucleotide metabolism. This Methylobacterium radiotolerans (strain ATCC 27329 / DSM 1819 / JCM 2831 / NBRC 15690 / NCIMB 10815 / 0-1) protein is Adenylate kinase.